Here is a 152-residue protein sequence, read N- to C-terminus: Large ribosomal subunit protein uL30 (152 aa).

Belongs to the universal ribosomal protein uL30 family. As to quaternary structure, part of the 50S ribosomal subunit.

This Methanosphaera stadtmanae (strain ATCC 43021 / DSM 3091 / JCM 11832 / MCB-3) protein is Large ribosomal subunit protein uL30.